Here is a 76-residue protein sequence, read N- to C-terminus: ATP synthase subunit c (76 aa).

2 consecutive transmembrane segments (helical) span residues 12 to 32 (LGSIGYGLAAIGPGVGVGIIF) and 54 to 74 (ILGFAFCEALALIGLVMPFVY).

The protein belongs to the ATPase C chain family. In terms of assembly, F-type ATPases have 2 components, F(1) - the catalytic core - and F(0) - the membrane proton channel. F(1) has five subunits: alpha(3), beta(3), gamma(1), delta(1), epsilon(1). F(0) has three main subunits: a(1), b(2) and c(10-14). The alpha and beta chains form an alternating ring which encloses part of the gamma chain. F(1) is attached to F(0) by a central stalk formed by the gamma and epsilon chains, while a peripheral stalk is formed by the delta and b chains.

The protein resides in the cell membrane. In terms of biological role, f(1)F(0) ATP synthase produces ATP from ADP in the presence of a proton or sodium gradient. F-type ATPases consist of two structural domains, F(1) containing the extramembraneous catalytic core and F(0) containing the membrane proton channel, linked together by a central stalk and a peripheral stalk. During catalysis, ATP synthesis in the catalytic domain of F(1) is coupled via a rotary mechanism of the central stalk subunits to proton translocation. Functionally, key component of the F(0) channel; it plays a direct role in translocation across the membrane. A homomeric c-ring of between 10-14 subunits forms the central stalk rotor element with the F(1) delta and epsilon subunits. This chain is ATP synthase subunit c, found in Streptomyces coelicolor (strain ATCC BAA-471 / A3(2) / M145).